The following is a 336-amino-acid chain: Aromatic prenyltransferase (336 aa).

The protein belongs to the aromatic prenyltransferase family.

Its function is as follows. Prenyltransferase that attaches isoprenoid moieties to carbon atoms of aromatic substrates in an enzyme-catalyzed Friedel-Crafts reaction. Shows specificity for dimethylallyl diphosphate (DMAPP) and does not accept geranyl diphosphate (GPP) or isopentenyl diphosphate (IPP). Prenylates the artificial substrate 2,7-dihydroxynaphthalene (2,7-DHN), as well as dihydrophenazine-1-carboxylic acid at a lower level. Only traces of products are detected with aspulvinone E, flaviolin, or 4-hydroxybenzoic acid as substrates; and no product is formed with L-tryptophan, L-tyrosine, or 4-hydroxyphenylpyruvate. Ptf seems no to be involved in the prenylation reaction in the biosynthesis of aspulvinone H and J and the physiological function of ptf remains unknown. The chain is Aromatic prenyltransferase from Aspergillus terreus (strain NIH 2624 / FGSC A1156).